A 689-amino-acid polypeptide reads, in one-letter code: Pentatricopeptide repeat-containing protein At2g03380, mitochondrial (689 aa).

Residues 1–12 (MLRSITLSPTRR) constitute a mitochondrion transit peptide. 16 PPR repeats span residues 75–105 (DISIATKLVSLYGFFGYTKDARLVFDQIPEP), 106–140 (DFYLWKVMLRCYCLNKESVEVVKLYDLLMKHGFRY), 141–171 (DDIVFSKALKACTELQDLDNGKKIHCQLVKV), 175–205 (DNVVLTGLLDMYAKCGEIKSAHKVFNDITLR), 206–240 (NVVCWTSMIAGYVKNDLCEEGLVLFNRMRENNVLG), 241–275 (NEYTYGTLIMACTKLSALHQGKWFHGCLVKSGIEL), 276–306 (SSCLVTSLLDMYVKCGDISNARRVFNEHSHV), 307–341 (DLVMWTAMIVGYTHNGSVNEALSLFQKMKGVEIKP), 342–372 (NCVTIASVLSGCGLIENLELGRSVHGLSIKV), 376–406 (DTNVANALVHMYAKCYQNRDAKYVFEMESEK), 407–441 (DIVAWNSIISGFSQNGSIHEALFLFHRMNSESVTP), 442–476 (NGVTVASLFSACASLGSLAVGSSLHAYSVKLGFLA), 479–509 (SVHVGTALLDFYAKCGDPQSARLIFDTIEEK), 510–544 (NTITWSAMIGGYGKQGDTIGSLELFEEMLKKQQKP), 545–580 (NESTFTSILSACGHTGMVNEGKKYFSSMYKDYNFTP), and 581–611 (STKHYTCMVDMLARAGELEQALDIIEKMPIQ). Residues 616–689 (CFGAFLHGCG…SKIAGHSTME (74 aa)) are type E motif; degenerate.

It belongs to the PPR family. PCMP-E subfamily.

The protein localises to the mitochondrion. In Arabidopsis thaliana (Mouse-ear cress), this protein is Pentatricopeptide repeat-containing protein At2g03380, mitochondrial (PCMP-E47).